The primary structure comprises 184 residues: Photosystem I assembly protein Ycf4 (184 aa).

2 helical membrane-spanning segments follow: residues 22 to 42 and 64 to 84; these read LCWA…GFSS and IVMC…WCTI.

It belongs to the Ycf4 family.

It localises to the plastid. The protein resides in the chloroplast thylakoid membrane. Functionally, seems to be required for the assembly of the photosystem I complex. The polypeptide is Photosystem I assembly protein Ycf4 (Angiopteris evecta (Mule's foot fern)).